Here is a 241-residue protein sequence, read N- to C-terminus: Bidirectional sugar transporter SWEET17 (241 aa).

Residues 1 to 3 (MAE) are Vacuolar-facing. A helical transmembrane segment spans residues 4-24 (ASFYIGVIGNVISVLVFLSPV). Residues 6-92 (FYIGVIGNVI…SLFLFYAPRH (87 aa)) form the MtN3/slv 1 domain. Residues 25–41 (ETFWKIVKRRSTEEYKS) are Cytoplasmic-facing. Residues 42–62 (LPYICTLLGSSLWTYYGIVTP) traverse the membrane as a helical segment. Residues 63–69 (GEYLVST) lie on the Vacuolar side of the membrane. The helical transmembrane segment at 70-90 (VNGFGALVETIYVSLFLFYAP) threads the bilayer. Over 91–94 (RHLK) the chain is Cytoplasmic. A helical transmembrane segment spans residues 95–115 (LKTVDVDAMLNVFFPIAAIVA). Over 116-128 (TRSAFEDEKMRSQ) the chain is Vacuolar. Residues 129–149 (SIGFISAGLNIIMYGSPLSAM) form a helical membrane-spanning segment. A MtN3/slv 2 domain is found at 129–212 (SIGFISAGLN…LILYGIYRNA (84 aa)). The Cytoplasmic portion of the chain corresponds to 150–161 (KTVVTTKSVKYM). A helical transmembrane segment spans residues 162–182 (PFWLSFFLFLNGAIWAVYALL). Residues 183–185 (QHD) lie on the Vacuolar side of the membrane. Residues 186–206 (VFLLVPNGVGFVFGTMQLILY) form a helical membrane-spanning segment. The Cytoplasmic segment spans residues 207–241 (GIYRNAKPVGLSNGLSEIAQDEEEGLTSRVEPLLS).

This sequence belongs to the SWEET sugar transporter family. In terms of assembly, forms homooligomers and heterooligomers with SWEET1, SWEET2, SWEET3, SWEET4, SWEET6, SWEET7, SWEET8, SWEET9, SWEET11, SWEET12, SWEET13, SWEET15 and SWEET16. As to expression, expressed in leaves at low levels, mostly in xylem and parenchyma. Highly expressed in the cortex of roots, predominantly in tips and mature regions, especially in tonoplasts. Also accumulates in cotyledons, stems, flowers, and siliques.

The protein localises to the vacuole membrane. Acts as a vacuolar hexose transporter. Regulates fructose (Fru) homeostasis in leaves and roots by exporting/importing Fru through the tonoplast regarding metabolic demand. The chain is Bidirectional sugar transporter SWEET17 from Arabidopsis thaliana (Mouse-ear cress).